The primary structure comprises 181 residues: Peptidyl-tRNA hydrolase 2, mitochondrial (181 aa).

Residues 10–32 (YLVHPGTLSLAAGVACGMCLGWG) form a helical membrane-spanning segment. Residues K78, K83, K97, K108, K117, and K179 each participate in a glycyl lysine isopeptide (Lys-Gly) (interchain with G-Cter in ubiquitin) cross-link.

Belongs to the PTH2 family. Monomer. Ubiquitinated by PRKN during mitophagy, leading to its degradation and enhancement of mitophagy. Deubiquitinated by USP30.

Its subcellular location is the mitochondrion outer membrane. The enzyme catalyses an N-acyl-L-alpha-aminoacyl-tRNA + H2O = an N-acyl-L-amino acid + a tRNA + H(+). Peptidyl-tRNA hydrolase which releases tRNAs from the ribosome during protein synthesis. Promotes caspase-independent apoptosis by regulating the function of two transcriptional regulators, AES and TLE1. The polypeptide is Peptidyl-tRNA hydrolase 2, mitochondrial (Ptrh2) (Mus musculus (Mouse)).